The following is a 290-amino-acid chain: Agmatinase (290 aa).

His112, Asp135, His137, Asp139, Asp216, and Asp218 together coordinate Mn(2+).

This sequence belongs to the arginase family. Agmatinase subfamily. It depends on Mn(2+) as a cofactor.

The catalysed reaction is agmatine + H2O = urea + putrescine. It functions in the pathway amine and polyamine biosynthesis; putrescine biosynthesis via agmatine pathway; putrescine from agmatine: step 1/1. In terms of biological role, catalyzes the formation of putrescine from agmatine. This chain is Agmatinase (speB), found in Bacillus anthracis.